The sequence spans 103 residues: UPF0145 protein BLi01945/BL05168 (103 aa).

It belongs to the UPF0145 family.

The chain is UPF0145 protein BLi01945/BL05168 from Bacillus licheniformis (strain ATCC 14580 / DSM 13 / JCM 2505 / CCUG 7422 / NBRC 12200 / NCIMB 9375 / NCTC 10341 / NRRL NRS-1264 / Gibson 46).